Reading from the N-terminus, the 189-residue chain is Elongation factor P (189 aa).

Lysine 34 carries the post-translational modification N6-(3,6-diaminohexanoyl)-5-hydroxylysine.

It belongs to the elongation factor P family. May be beta-lysylated on the epsilon-amino group of Lys-34 by the combined action of EpmA and EpmB, and then hydroxylated on the C5 position of the same residue by EpmC (if this protein is present). Lysylation is critical for the stimulatory effect of EF-P on peptide-bond formation. The lysylation moiety may extend toward the peptidyltransferase center and stabilize the terminal 3-CCA end of the tRNA. Hydroxylation of the C5 position on Lys-34 may allow additional potential stabilizing hydrogen-bond interactions with the P-tRNA.

The protein localises to the cytoplasm. Its pathway is protein biosynthesis; polypeptide chain elongation. Its function is as follows. Involved in peptide bond synthesis. Alleviates ribosome stalling that occurs when 3 or more consecutive Pro residues or the sequence PPG is present in a protein, possibly by augmenting the peptidyl transferase activity of the ribosome. Modification of Lys-34 is required for alleviation. The sequence is that of Elongation factor P from Legionella pneumophila (strain Lens).